Here is an 825-residue protein sequence, read N- to C-terminus: Translation initiation factor IF-2 (825 aa).

4 stretches are compositionally biased toward basic and acidic residues: residues methionine 1–lysine 19, arginine 35–arginine 45, leucine 70–lysine 98, and lysine 113–alanine 122. The disordered stretch occupies residues methionine 1–glutamate 239. Residues proline 158–serine 169 are compositionally biased toward low complexity. The segment covering glycine 181–arginine 191 has biased composition (basic residues). The segment covering glutamine 194 to arginine 208 has biased composition (polar residues). Residues glutamine 211–glutamine 220 are compositionally biased toward basic residues. The region spanning valine 326 to lysine 495 is the tr-type G domain. The segment at glycine 335 to threonine 342 is G1. Position 335-342 (glycine 335–threonine 342) interacts with GTP. A G2 region spans residues glycine 360–asparagine 364. The segment at aspartate 381–glycine 384 is G3. Residues aspartate 381–histidine 385 and asparagine 435–aspartate 438 each bind GTP. A G4 region spans residues asparagine 435 to aspartate 438. Residues serine 471 to lysine 473 form a G5 region.

This sequence belongs to the TRAFAC class translation factor GTPase superfamily. Classic translation factor GTPase family. IF-2 subfamily.

It is found in the cytoplasm. Functionally, one of the essential components for the initiation of protein synthesis. Protects formylmethionyl-tRNA from spontaneous hydrolysis and promotes its binding to the 30S ribosomal subunits. Also involved in the hydrolysis of GTP during the formation of the 70S ribosomal complex. The protein is Translation initiation factor IF-2 of Lactobacillus delbrueckii subsp. bulgaricus (strain ATCC 11842 / DSM 20081 / BCRC 10696 / JCM 1002 / NBRC 13953 / NCIMB 11778 / NCTC 12712 / WDCM 00102 / Lb 14).